We begin with the raw amino-acid sequence, 392 residues long: Riboflavin biosynthesis protein PYRD, chloroplastic (392 aa).

The transit peptide at 1 to 26 (MASSLVSRPHLTQRPVRAATLASATR) directs the protein to the chloroplast. Residues 46-168 (LDDAHYMRRC…KLQGAGISVR (123 aa)) form the CMP/dCMP-type deaminase domain. H95 contributes to the Zn(2+) binding site. The active-site Proton donor is E97. Residues C120 and C129 each contribute to the Zn(2+) site.

Requires Zn(2+) as cofactor.

It localises to the plastid. Its subcellular location is the chloroplast. It carries out the reaction 2,5-diamino-6-hydroxy-4-(5-phosphoribosylamino)-pyrimidine + H2O + H(+) = 5-amino-6-(5-phospho-D-ribosylamino)uracil + NH4(+). It participates in cofactor biosynthesis; riboflavin biosynthesis; 5-amino-6-(D-ribitylamino)uracil from GTP: step 2/4. Monofunctional pyrimidine deaminase involved in the riboflavin biosynthesis pathway. Also has a reductase domain that lacks catalytically essential substrate-binding residues. The protein is Riboflavin biosynthesis protein PYRD, chloroplastic (PYRD) of Zea mays (Maize).